Reading from the N-terminus, the 242-residue chain is Acetoacetyl-CoA reductase (242 aa).

NADP(+) is bound by residues 12–14 (RGI) and 82–86 (NAGIT). Substrate is bound by residues D88 and 141-144 (QAGQ). The active-site Proton acceptor is Y147. 177–180 (PGYI) contributes to the NADP(+) binding site. 178–179 (GY) contacts substrate.

It belongs to the short-chain dehydrogenases/reductases (SDR) family.

The protein resides in the cytoplasm. It carries out the reaction a (3R)-3-hydroxyacyl-CoA + NADP(+) = a 3-oxoacyl-CoA + NADPH + H(+). It participates in biopolymer metabolism; poly-(R)-3-hydroxybutanoate biosynthesis. This Paracoccus denitrificans protein is Acetoacetyl-CoA reductase (phaB).